A 199-amino-acid chain; its full sequence is Acireductone dioxygenase 1 (199 aa).

4 residues coordinate Fe(2+): His-99, His-101, Glu-105, and His-144. 4 residues coordinate Ni(2+): His-99, His-101, Glu-105, and His-144.

Belongs to the acireductone dioxygenase (ARD) family. The cofactor is Fe(2+). Requires Ni(2+) as cofactor.

It is found in the cytoplasm. The protein resides in the nucleus. The enzyme catalyses 1,2-dihydroxy-5-(methylsulfanyl)pent-1-en-3-one + O2 = 4-methylsulfanyl-2-oxobutanoate + formate + 2 H(+). The catalysed reaction is 1,2-dihydroxy-5-(methylsulfanyl)pent-1-en-3-one + O2 = 3-(methylsulfanyl)propanoate + CO + formate + 2 H(+). It participates in amino-acid biosynthesis; L-methionine biosynthesis via salvage pathway; L-methionine from S-methyl-5-thio-alpha-D-ribose 1-phosphate: step 5/6. In terms of biological role, catalyzes 2 different reactions between oxygen and the acireductone 1,2-dihydroxy-3-keto-5-methylthiopentene (DHK-MTPene) depending upon the metal bound in the active site. Fe-containing acireductone dioxygenase (Fe-ARD) produces formate and 2-keto-4-methylthiobutyrate (KMTB), the alpha-ketoacid precursor of methionine in the methionine recycle pathway. Ni-containing acireductone dioxygenase (Ni-ARD) produces methylthiopropionate, carbon monoxide and formate, and does not lie on the methionine recycle pathway. The protein is Acireductone dioxygenase 1 (ARD1) of Arabidopsis thaliana (Mouse-ear cress).